The primary structure comprises 74 residues: Protein YkgV (74 aa).

This is Protein YkgV from Escherichia coli (strain K12).